The chain runs to 90 residues: UPF0237 protein NMB1653 (90 aa).

An ACT domain is found at 5 to 83; that stretch reads VITVIGKDRV…LDIRMQNEEI (79 aa).

Belongs to the UPF0237 family.

This chain is UPF0237 protein NMB1653, found in Neisseria meningitidis serogroup B (strain ATCC BAA-335 / MC58).